The primary structure comprises 526 residues: Peptide chain release factor 3 (526 aa).

A tr-type G domain is found at 8–277 (GKRRTFAIIS…GLTEWAPAPQ (270 aa)). Residues 17–24 (SHPDAGKT), 85–89 (DTPGH), and 139–142 (NKMD) each bind GTP.

This sequence belongs to the TRAFAC class translation factor GTPase superfamily. Classic translation factor GTPase family. PrfC subfamily.

It localises to the cytoplasm. In terms of biological role, increases the formation of ribosomal termination complexes and stimulates activities of RF-1 and RF-2. It binds guanine nucleotides and has strong preference for UGA stop codons. It may interact directly with the ribosome. The stimulation of RF-1 and RF-2 is significantly reduced by GTP and GDP, but not by GMP. The polypeptide is Peptide chain release factor 3 (Aliivibrio salmonicida (strain LFI1238) (Vibrio salmonicida (strain LFI1238))).